The following is a 183-amino-acid chain: MKLIGITGMPGSGKSAITKLAEKYKIIVVSMGDVVRYETSKQGLRLNPENVGNTAVKLREIHGKEAIAVPCLNYVNEKYKCEDFVIIEGIRSIYEVNYLKKHAELDVIAIHSSPKTRFERLSGRNREDDSNDWNTFVERDERELNFSIGSVISLADYMVVNEGNYMDFMNDLENTFKKVINVI.

8-15 (GMPGSGKS) contributes to the ATP binding site.

It belongs to the UPF0200 family.

The protein is UPF0200 protein MmarC6_1392 of Methanococcus maripaludis (strain C6 / ATCC BAA-1332).